The sequence spans 338 residues: Nucleoid-associated protein VSAL_I1059 (338 aa).

The interval 319–338 (KGTPPNLKDQLTRRLGSSES) is disordered.

Belongs to the YejK family.

It localises to the cytoplasm. The protein resides in the nucleoid. The chain is Nucleoid-associated protein VSAL_I1059 from Aliivibrio salmonicida (strain LFI1238) (Vibrio salmonicida (strain LFI1238)).